The sequence spans 200 residues: Glycerol-3-phosphate acyltransferase (200 aa).

5 helical membrane passes run 8–28 (ALAL…GMVL), 57–77 (LAAA…VLAA), 88–108 (IAGL…FAGG), 114–134 (FLGI…LAWL), and 159–179 (FLLG…LIFW).

It belongs to the PlsY family. In terms of assembly, probably interacts with PlsX.

It is found in the cell inner membrane. It carries out the reaction an acyl phosphate + sn-glycerol 3-phosphate = a 1-acyl-sn-glycero-3-phosphate + phosphate. Its pathway is lipid metabolism; phospholipid metabolism. Functionally, catalyzes the transfer of an acyl group from acyl-phosphate (acyl-PO(4)) to glycerol-3-phosphate (G3P) to form lysophosphatidic acid (LPA). This enzyme utilizes acyl-phosphate as fatty acyl donor, but not acyl-CoA or acyl-ACP. This Roseobacter denitrificans (strain ATCC 33942 / OCh 114) (Erythrobacter sp. (strain OCh 114)) protein is Glycerol-3-phosphate acyltransferase.